The following is a 570-amino-acid chain: Dihydroxy-acid dehydratase 2 (570 aa).

[2Fe-2S] cluster is bound at residue cysteine 51. Aspartate 83 is a binding site for Mg(2+). A [2Fe-2S] cluster-binding site is contributed by cysteine 124. The Mg(2+) site is built by aspartate 125 and lysine 126. Lysine 126 carries the post-translational modification N6-carboxylysine. Cysteine 196 is a binding site for [2Fe-2S] cluster. A Mg(2+)-binding site is contributed by glutamate 446. Serine 472 serves as the catalytic Proton acceptor.

It belongs to the IlvD/Edd family. As to quaternary structure, homodimer. Requires [2Fe-2S] cluster as cofactor. The cofactor is Mg(2+).

The catalysed reaction is (2R)-2,3-dihydroxy-3-methylbutanoate = 3-methyl-2-oxobutanoate + H2O. It carries out the reaction (2R,3R)-2,3-dihydroxy-3-methylpentanoate = (S)-3-methyl-2-oxopentanoate + H2O. Its pathway is amino-acid biosynthesis; L-isoleucine biosynthesis; L-isoleucine from 2-oxobutanoate: step 3/4. It participates in amino-acid biosynthesis; L-valine biosynthesis; L-valine from pyruvate: step 3/4. Functions in the biosynthesis of branched-chain amino acids. Catalyzes the dehydration of (2R,3R)-2,3-dihydroxy-3-methylpentanoate (2,3-dihydroxy-3-methylvalerate) into 2-oxo-3-methylpentanoate (2-oxo-3-methylvalerate) and of (2R)-2,3-dihydroxy-3-methylbutanoate (2,3-dihydroxyisovalerate) into 2-oxo-3-methylbutanoate (2-oxoisovalerate), the penultimate precursor to L-isoleucine and L-valine, respectively. The chain is Dihydroxy-acid dehydratase 2 from Bordetella bronchiseptica (strain ATCC BAA-588 / NCTC 13252 / RB50) (Alcaligenes bronchisepticus).